The sequence spans 170 residues: MEPEVEVYALGQHICMSAHKARRVIDQIRGRPYDEILMILELMPYRACYPIFKLVYSAAANATNNKGFNKTALIISQAEVNEGTVVKKLKPRARGRSYPIKRPTCHITIVLQDISKDKNFYIWLRKKGGWIYKEKYIDIREKYEYFLHEALNRGRMEWANSGYEVVWDKK.

Belongs to the universal ribosomal protein uL22 family. In terms of assembly, part of the 50S ribosomal subunit.

Its subcellular location is the plastid. The protein localises to the chloroplast. This protein binds specifically to 23S rRNA. In terms of biological role, the globular domain of the protein is located near the polypeptide exit tunnel on the outside of the subunit, while an extended beta-hairpin is found that lines the wall of the exit tunnel in the center of the 70S ribosome. The protein is Large ribosomal subunit protein uL22c (rpl22) of Nandina domestica (Heavenly bamboo).